Here is a 222-residue protein sequence, read N- to C-terminus: UPF0688 protein C1orf174 homolog (222 aa).

Disordered regions lie at residues 23–57 (STSL…RTSK) and 98–158 (EDGA…EPVP). Residues 33–48 (ASSTSAKTTCLASSSH) are compositionally biased toward polar residues. Positions 121-131 (VSEEPSVKAEE) are enriched in basic and acidic residues. S172 is subject to Phosphoserine.

The protein belongs to the UPF0688 family.

The protein localises to the nucleus. The chain is UPF0688 protein C1orf174 homolog from Rattus norvegicus (Rat).